We begin with the raw amino-acid sequence, 363 residues long: Galanin receptor 2a (363 aa).

The Extracellular segment spans residues 1 to 23 (MNASQQIHVFSSHWKVESVIISL). Residues 24-44 (IFSMIFLVGTVGNCLVLAVLI) form a helical membrane-spanning segment. Topologically, residues 45–54 (RNGQMNTKST) are cytoplasmic. The helical transmembrane segment at 55–75 (NLFILNLGLADLCFIVFCVPL) threads the bilayer. Topologically, residues 76–94 (QATIYTMDEWVFGAFVCKA) are extracellular. Cys-92 and Cys-169 are oxidised to a cystine. Residues 95-115 (VHFIIYLTMYASIFTLAAVSL) form a helical membrane-spanning segment. The Cytoplasmic portion of the chain corresponds to 116-135 (DRYLAIRYPLRSRETRTPRN). Residues 136–156 (ALTSISLVWALSLFFSSPYLS) traverse the membrane as a helical segment. At 157-179 (YYQQMDLDGTTVCIPAWSVHHRQ) the chain is on the extracellular side. The chain crosses the membrane as a helical span at residues 180-200 (AMDICTFIFGYLIPVLILGIT). The Cytoplasmic portion of the chain corresponds to 201-230 (YARTIRYLWTSVDPMQDMSESRKAKRKVTK). The helical transmembrane segment at 231–251 (MIIIVAVLFCLCWLPHHLVIL) threads the bilayer. Residues 252–268 (CMWFGHFPLNHTTYVLR) lie on the Extracellular side of the membrane. The chain crosses the membrane as a helical span at residues 269–289 (ILSHLVAYANSCLNPIVYALV). Residues 290–363 (SKHFRKGFKK…TSAFMTFNVT (74 aa)) lie on the Cytoplasmic side of the membrane.

It belongs to the G-protein coupled receptor 1 family. As to expression, expressed in neurons in the ventral area of the interpeduncular nucleus (IPN) where expression often overlaps with spx1.

The protein resides in the membrane. Functionally, receptor for the hormone galanin. Receptor for the hormones spexin-1 and spexin-2. The chain is Galanin receptor 2a from Danio rerio (Zebrafish).